The sequence spans 187 residues: UPF0301 protein Pcryo_0062 (187 aa).

This sequence belongs to the UPF0301 (AlgH) family.

The sequence is that of UPF0301 protein Pcryo_0062 from Psychrobacter cryohalolentis (strain ATCC BAA-1226 / DSM 17306 / VKM B-2378 / K5).